Consider the following 257-residue polypeptide: Phosphonates import ATP-binding protein PhnC (257 aa).

In terms of domain architecture, ABC transporter spans 2–246; sequence IEFRNVSKVY…KFAEIYGDVA (245 aa). Residue 35–42 coordinates ATP; the sequence is GLSGAGKS.

This sequence belongs to the ABC transporter superfamily. Phosphonates importer (TC 3.A.1.9.1) family. The complex is composed of two ATP-binding proteins (PhnC), two transmembrane proteins (PhnE) and a solute-binding protein (PhnD).

It localises to the cell membrane. The catalysed reaction is phosphonate(out) + ATP + H2O = phosphonate(in) + ADP + phosphate + H(+). Part of the ABC transporter complex PhnCDE involved in phosphonates import. Responsible for energy coupling to the transport system. This chain is Phosphonates import ATP-binding protein PhnC, found in Bacillus cereus (strain ATCC 14579 / DSM 31 / CCUG 7414 / JCM 2152 / NBRC 15305 / NCIMB 9373 / NCTC 2599 / NRRL B-3711).